A 299-amino-acid polypeptide reads, in one-letter code: MVEKSRLRIAMQKSGRLSKESQQLLEKCGIKIHLQQQRLLAFAENMPIDIMRVRDDDIPGLVLDSVVDLGIIGQNVLEEELLTRRAQGENPRYVTLRRLDFGTCRLSIALPIDQAWNGPKCLQNKRIATSYPHLLKQYLDKLGISFKSCLLNGSVEVAPRAGLADAICDLVSTGATLEANGLREVEVIYRSKAYLIQRDGELSLSKQALVDKLMIRIQGVIQARESKYIMMHAPTERLDNIISLLPGAERPTVLPLASDHNLVVMHMVSRETLFWETMENLKALGARSILVLPIEKMME.

It belongs to the ATP phosphoribosyltransferase family. Long subfamily. The cofactor is Mg(2+).

The protein resides in the cytoplasm. It catalyses the reaction 1-(5-phospho-beta-D-ribosyl)-ATP + diphosphate = 5-phospho-alpha-D-ribose 1-diphosphate + ATP. It functions in the pathway amino-acid biosynthesis; L-histidine biosynthesis; L-histidine from 5-phospho-alpha-D-ribose 1-diphosphate: step 1/9. Its activity is regulated as follows. Feedback inhibited by histidine. Functionally, catalyzes the condensation of ATP and 5-phosphoribose 1-diphosphate to form N'-(5'-phosphoribosyl)-ATP (PR-ATP). Has a crucial role in the pathway because the rate of histidine biosynthesis seems to be controlled primarily by regulation of HisG enzymatic activity. The chain is ATP phosphoribosyltransferase from Baumannia cicadellinicola subsp. Homalodisca coagulata.